The sequence spans 213 residues: Uracil phosphoribosyltransferase (213 aa).

Residues R78, R103, and 130–138 contribute to the 5-phospho-alpha-D-ribose 1-diphosphate site; that span reads DPMLATGGS. Uracil-binding positions include I193 and 198–200; that span reads GDA. A 5-phospho-alpha-D-ribose 1-diphosphate-binding site is contributed by D199.

This sequence belongs to the UPRTase family. It depends on Mg(2+) as a cofactor.

The catalysed reaction is UMP + diphosphate = 5-phospho-alpha-D-ribose 1-diphosphate + uracil. Its pathway is pyrimidine metabolism; UMP biosynthesis via salvage pathway; UMP from uracil: step 1/1. Its activity is regulated as follows. Allosterically activated by GTP. Catalyzes the conversion of uracil and 5-phospho-alpha-D-ribose 1-diphosphate (PRPP) to UMP and diphosphate. This Bordetella bronchiseptica (strain ATCC BAA-588 / NCTC 13252 / RB50) (Alcaligenes bronchisepticus) protein is Uracil phosphoribosyltransferase.